A 118-amino-acid chain; its full sequence is Large ribosomal subunit protein uL18 (118 aa).

The disordered stretch occupies residues 1 to 24 (MISKPDKNKTRQRRHARVRGKISG). The span at 10–20 (TRQRRHARVRG) shows a compositional bias: basic residues.

Belongs to the universal ribosomal protein uL18 family. Part of the 50S ribosomal subunit; part of the 5S rRNA/L5/L18/L25 subcomplex. Contacts the 5S and 23S rRNAs.

Its function is as follows. This is one of the proteins that bind and probably mediate the attachment of the 5S RNA into the large ribosomal subunit, where it forms part of the central protuberance. In Lactiplantibacillus plantarum (strain ATCC BAA-793 / NCIMB 8826 / WCFS1) (Lactobacillus plantarum), this protein is Large ribosomal subunit protein uL18.